Here is a 403-residue protein sequence, read N- to C-terminus: Ribosomal RNA large subunit methyltransferase I (403 aa).

The 80-residue stretch at 9-88 folds into the PUA domain; the sequence is YPRLVLSKGR…ESIDIAFFTR (80 aa).

This sequence belongs to the methyltransferase superfamily. RlmI family.

The protein localises to the cytoplasm. It carries out the reaction cytidine(1962) in 23S rRNA + S-adenosyl-L-methionine = 5-methylcytidine(1962) in 23S rRNA + S-adenosyl-L-homocysteine + H(+). Specifically methylates the cytosine at position 1962 (m5C1962) of 23S rRNA. This is Ribosomal RNA large subunit methyltransferase I from Salmonella newport (strain SL254).